Here is a 408-residue protein sequence, read N- to C-terminus: CST complex subunit STN1 (408 aa).

Residues 8 to 195 (MQCESSPKEE…KVYDQPFRNP (188 aa)) are interaction with CTC1. Positions 64–165 (VDIMGAVISV…EICATIYYKV (102 aa)) form a DNA-binding region, OB. Winged helix-turn-helix (wHTH) stretches follow at residues 201-304 (EALN…YVTS) and 305-408 (KDKD…YTAF).

This sequence belongs to the STN1 family. In terms of assembly, component of the CST complex, composed of TEN1/C17orf106, CTC1/C17orf68 and STN1; in the complex interacts directly with TEN1 and CTC1. Interacts with ACD/TPP1, POT1 and POLA1.

Its subcellular location is the nucleus. The protein localises to the chromosome. The protein resides in the telomere. Component of the CST complex proposed to act as a specialized replication factor promoting DNA replication under conditions of replication stress or natural replication barriers such as the telomere duplex. The CST complex binds single-stranded DNA with high affinity in a sequence-independent manner, while isolated subunits bind DNA with low affinity by themselves. Initially the CST complex has been proposed to protect telomeres from DNA degradation. However, the CST complex has been shown to be involved in several aspects of telomere replication. The CST complex inhibits telomerase and is involved in telomere length homeostasis; it is proposed to bind to newly telomerase-synthesized 3' overhangs and to terminate telomerase action implicating the association with the ACD:POT1 complex thus interfering with its telomerase stimulation activity. The CST complex is also proposed to be involved in fill-in synthesis of the telomeric C-strand probably implicating recruitment and activation of DNA polymerase alpha. The CST complex facilitates recovery from many forms of exogenous DNA damage; seems to be involved in the re-initiation of DNA replication at repaired forks and/or dormant origins. Required for efficicient replication of the duplex region of the telomere. Promotes efficient replication of lagging-strand telomeres. Promotes general replication start following replication-fork stalling implicating new origin firing. May be in involved in C-strand fill-in during late S/G2 phase independent of its role in telomere duplex replication. The protein is CST complex subunit STN1 of Rattus norvegicus (Rat).